Consider the following 373-residue polypeptide: MWVCGALCRTRAPAQLGQRLLPESRRRRPASASFSASAEPSRVRALVYGHHGDPAKVVELKNLELAAVGGSHVHVKMLAAPINPSDINMIQGNYGLLPQLPAVGGNEGVGQVVAVGSGVTGVKPGDWVIPANPGLGTWRTEAVFGEEELITVPSDIPLQSAATLGVNPCTAYRMLVDFERLRPRDSIIQNASNSGVGQAVIQIAAARGLRTINVLRDTPDLQKLTDTLKNLGANHVVTEEELRKPEMKSFFKDVPQPRLALNCVGGKSSTELLRHLAPGGTMVTYGGMAKQPVIASVSQLIFKDLKLRGFWLSQWKKDHSPDQFKELILTLCDLIRRGQLTAPACSEVPLQDYLCALEASTQPFVSSKQILTM.

A mitochondrion-targeting transit peptide spans 1 to 53 (MWVCGALCRTRAPAQLGQRLLPESRRRRPASASFSASAEPSRVRALVYGHHGD). N6-acetyllysine; alternate is present on Lys-61. An N6-succinyllysine; alternate modification is found at Lys-61. Residue Tyr-94 is the Proton donor of the active site. NADP(+) contacts are provided by residues Asn-167, 193–196 (NSGV), and 216–218 (RDT). Residues Lys-252 and Lys-267 each carry the N6-acetyllysine; alternate modification. 2 positions are modified to N6-succinyllysine; alternate: Lys-252 and Lys-267. Residues 285-288 (YGGM) and 310-312 (FWL) contribute to the NADP(+) site. Position 316 is an N6-succinyllysine (Lys-316). NADP(+) is bound at residue Lys-368.

It belongs to the zinc-containing alcohol dehydrogenase family. Quinone oxidoreductase subfamily. In terms of assembly, homodimer.

Its subcellular location is the mitochondrion. The enzyme catalyses a 2,3-saturated acyl-[ACP] + NADP(+) = a (2E)-enoyl-[ACP] + NADPH + H(+). It catalyses the reaction (2E)-butenoyl-[ACP] + NADPH + H(+) = butanoyl-[ACP] + NADP(+). It carries out the reaction (2E)-hexenoyl-[ACP] + NADPH + H(+) = hexanoyl-[ACP] + NADP(+). The catalysed reaction is (2E)-octenoyl-[ACP] + NADPH + H(+) = octanoyl-[ACP] + NADP(+). The enzyme catalyses (2E)-decenoyl-[ACP] + NADPH + H(+) = decanoyl-[ACP] + NADP(+). It catalyses the reaction (2E)-dodecenoyl-[ACP] + NADPH + H(+) = dodecanoyl-[ACP] + NADP(+). It carries out the reaction (2E)-tetradecenoyl-[ACP] + NADPH + H(+) = tetradecanoyl-[ACP] + NADP(+). The catalysed reaction is (2E)-hexadecenoyl-[ACP] + NADPH + H(+) = hexadecanoyl-[ACP] + NADP(+). In terms of biological role, catalyzes the NADPH-dependent reduction of trans-2-enoyl thioesters in mitochondrial fatty acid synthesis (fatty acid synthesis type II). Fatty acid chain elongation in mitochondria uses acyl carrier protein (ACP) as an acyl group carrier, but the enzyme accepts both ACP and CoA thioesters as substrates in vitro. Displays a preference for medium-chain over short- and long-chain substrates. May provide the octanoyl chain used for lipoic acid biosynthesis, regulating protein lipoylation and mitochondrial respiratory activity particularly in Purkinje cells. Involved in iron homeostasis; affecting Fe-S cluster assembly and ceramide metabolism. Required for proper morphology and bioenergetic functions of mitochondria. Required for maintenance of neurons. The chain is Enoyl-[acyl-carrier-protein] reductase, mitochondrial (MECR) from Bos taurus (Bovine).